The sequence spans 777 residues: DISP complex protein LRCH3 (777 aa).

LRR repeat units lie at residues 56 to 79, 81 to 104, 105 to 127, 128 to 150, 152 to 172, 173 to 195, 196 to 218, 220 to 239, 240 to 264, and 266 to 290; these read AAVT…AANH, LTDT…ACHF, VSLE…ILNL, QALT…LCNL, LKVL…IGHL, RHLM…IGNL, EALR…LAEL, LIRL…CYRN, LRHL…CIKG, and VHIF…DRRP. A mediates interaction with DOCK7 region spans residues 56 to 290; it reads AAVTGVLSLS…PDLPDYDRRP (235 aa). Phosphoserine occurs at positions 324, 415, and 419. The segment at 382–648 is mediates direct interaction with MYO6; sequence TAEEEEAEVR…DSTDSITGQN (267 aa). Residues 568 to 590 form a disordered region; the sequence is FTPLKSDDRPNALLSSPATETVH. Ser611 and Ser628 each carry phosphoserine. A disordered region spans residues 621 to 653; sequence ETNKGHASPLPPSAAPTTDSTDSITGQNSRQRE. Residues 635–645 are compositionally biased toward low complexity; it reads APTTDSTDSIT. Residues 652 to 765 form the Calponin-homology (CH) domain; sequence REEELELIDQ…VTVQALLELA (114 aa).

Component of the DOCK7-induced septin displacement/DISP complex, at least composed of DOCK7, LRCH3 and MYO6.

It localises to the cytoplasm. Functionally, as part of the DISP complex, may regulate the association of septins with actin and thereby regulate the actin cytoskeleton. The chain is DISP complex protein LRCH3 from Homo sapiens (Human).